Reading from the N-terminus, the 330-residue chain is Tryptophan--tRNA ligase (330 aa).

ATP-binding positions include 10–12 (QTT) and 18–19 (GN). The 'HIGH' region signature appears at 11 to 19 (TTGALHLGN). Residue Asp-134 coordinates L-tryptophan. ATP-binding positions include 146 to 148 (GED), Ile-186, and 195 to 199 (KMSKS). A 'KMSKS' region motif is present at residues 195 to 199 (KMSKS).

The protein belongs to the class-I aminoacyl-tRNA synthetase family. As to quaternary structure, homodimer.

It is found in the cytoplasm. It catalyses the reaction tRNA(Trp) + L-tryptophan + ATP = L-tryptophyl-tRNA(Trp) + AMP + diphosphate + H(+). In terms of biological role, catalyzes the attachment of tryptophan to tRNA(Trp). This Rickettsia typhi (strain ATCC VR-144 / Wilmington) protein is Tryptophan--tRNA ligase.